Consider the following 356-residue polypeptide: tRNA-specific 2-thiouridylase MnmA 1 (356 aa).

Residues 8–15 and Met34 each bind ATP; that span reads GMSGGVDS. The active-site Nucleophile is Cys103. Cys103 and Cys199 form a disulfide bridge. Gly127 contributes to the ATP binding site. The segment at 149-151 is interaction with tRNA; it reads KDQ. The Cysteine persulfide intermediate role is filled by Cys199. The interval 305-306 is interaction with tRNA; that stretch reads RY.

This sequence belongs to the MnmA/TRMU family.

Its subcellular location is the cytoplasm. The catalysed reaction is S-sulfanyl-L-cysteinyl-[protein] + uridine(34) in tRNA + AH2 + ATP = 2-thiouridine(34) in tRNA + L-cysteinyl-[protein] + A + AMP + diphosphate + H(+). Its function is as follows. Catalyzes the 2-thiolation of uridine at the wobble position (U34) of tRNA, leading to the formation of s(2)U34. The sequence is that of tRNA-specific 2-thiouridylase MnmA 1 from Clostridium botulinum (strain Loch Maree / Type A3).